Here is a 267-residue protein sequence, read N- to C-terminus: N-acetylgalactosamine permease IIC component 1 (267 aa).

Residues 1-10 are Periplasmic-facing; sequence MHEITLLQGL. The region spanning 1–237 is the PTS EIIC type-4 domain; that stretch reads MHEITLLQGL…VAVLGAGFAV (237 aa). Residues 11–31 form a helical membrane-spanning segment; that stretch reads SLAALVFVLGIDFWLEALFLF. Over 32 to 33 the chain is Cytoplasmic; it reads RP. A helical transmembrane segment spans residues 34-54; sequence IIVCTLTGAILGDIQTGLITG. The Periplasmic portion of the chain corresponds to 55–66; the sequence is GLTELAFAGLTP. A helical transmembrane segment spans residues 67–87; that stretch reads AGGVQPPNPIMAGLMTTVIAW. The Cytoplasmic segment spans residues 88–94; sequence STGVDAK. The helical transmembrane segment at 95–115 threads the bilayer; sequence TAIGLGLPFSLLMQYVILFFY. The Periplasmic portion of the chain corresponds to 116-141; sequence SAFSLFMTKADKCAKEADTAAFSRLN. Residues 142–162 traverse the membrane as a helical segment; it reads WTTMLIVASAYAVIAFLCTYL. Residues 163 to 177 are Cytoplasmic-facing; that stretch reads AQGAMQALVKAMPAW. Residues 178 to 198 traverse the membrane as a helical segment; that stretch reads LTHGFEVAGGILPAVGFGLLL. At 199–209 the chain is on the periplasmic side; the sequence is RVMFKAQYIPY. Residues 210–230 traverse the membrane as a helical segment; it reads LIAGFLFVCYIQVSNLLPVAV. Over 231–267 the chain is Cytoplasmic; that stretch reads LGAGFAVYEFFNAKSRQQAQPQPVASKNEEEDYSNGI.

The protein resides in the cell inner membrane. Its function is as follows. The phosphoenolpyruvate-dependent sugar phosphotransferase system (PTS), a major carbohydrate active -transport system, catalyzes the phosphorylation of incoming sugar substrates concomitant with their translocation across the cell membrane. This system is involved in N-acetylgalactosamine transport. The sequence is that of N-acetylgalactosamine permease IIC component 1 (agaC) from Escherichia coli (strain K12).